Here is a 66-residue protein sequence, read N- to C-terminus: Beta-toxin ChFII.7 (66 aa).

Residues 1–66 enclose the LCN-type CS-alpha/beta domain; the sequence is KEGYLVNHST…VWPLPKKTCN (66 aa). Disulfide bonds link C12-C65, C16-C41, C25-C46, and C29-C48. N66 is subject to Asparagine amide.

As to expression, expressed by the venom gland.

Its subcellular location is the secreted. In terms of biological role, beta toxins bind voltage independently at site-4 of sodium channels (Nav) and shift the activation voltage toward more negative potentials, thereby affecting sodium channel activation CC and promoting spontaneous and repetitive firing. The polypeptide is Beta-toxin ChFII.7 (Centruroides hirsutipalpus (Scorpion)).